A 382-amino-acid chain; its full sequence is Innexin-8 (382 aa).

Helical transmembrane passes span 29–49 (LITA…TYVG), 103–123 (QWSS…KFLW), 187–207 (VIKI…AIFL), and 270–290 (IFLF…IAHF).

The protein belongs to the pannexin family.

It localises to the cell membrane. Its subcellular location is the cell junction. The protein resides in the gap junction. Structural component of the gap junctions. This is Innexin-8 (inx-8) from Caenorhabditis elegans.